Reading from the N-terminus, the 278-residue chain is Anamorsin homolog (278 aa).

The interval 1–147 (MESVSHLVSN…EIGSSAALPF (147 aa)) is N-terminal SAM-like domain. The segment at 147–191 (FANKISLGGNSKMETAKMWTLSSQDFVDDDIDIIDENTLIEEDDF) is linker. Residues Cys-204, Cys-214, Cys-217, and Cys-219 each coordinate [2Fe-2S] cluster. A fe-S binding site A region spans residues 204–219 (CDSAKKKRKACKNCSC). Cys-239, Cys-242, Cys-250, and Cys-253 together coordinate [4Fe-4S] cluster. 2 short sequence motifs (cx2C motif) span residues 239 to 242 (CGSC) and 250 to 253 (CSSC). Positions 239–253 (CGSCYLGDAFRCSSC) are fe-S binding site B.

This sequence belongs to the anamorsin family. As to quaternary structure, monomer. It depends on [2Fe-2S] cluster as a cofactor. Requires [4Fe-4S] cluster as cofactor.

It is found in the cytoplasm. Its subcellular location is the mitochondrion intermembrane space. Component of the cytosolic iron-sulfur (Fe-S) protein assembly (CIA) machinery. Required for the maturation of extramitochondrial Fe-S proteins. Part of an electron transfer chain functioning in an early step of cytosolic Fe-S biogenesis, facilitating the de novo assembly of a [4Fe-4S] cluster on the cytosolic Fe-S scaffold complex. Electrons are transferred from NADPH via a FAD- and FMN-containing diflavin oxidoreductase. Together with the diflavin oxidoreductase, also required for the assembly of the diferric tyrosyl radical cofactor of ribonucleotide reductase (RNR), probably by providing electrons for reduction during radical cofactor maturation in the catalytic small subunit. This Trichoplax adhaerens (Trichoplax reptans) protein is Anamorsin homolog.